Here is a 312-residue protein sequence, read N- to C-terminus: Glyoxylate/hydroxypyruvate reductase A (312 aa).

The active site involves R227. Catalysis depends on H275, which acts as the Proton donor.

It belongs to the D-isomer specific 2-hydroxyacid dehydrogenase family. GhrA subfamily.

Its subcellular location is the cytoplasm. The catalysed reaction is glycolate + NADP(+) = glyoxylate + NADPH + H(+). It catalyses the reaction (R)-glycerate + NAD(+) = 3-hydroxypyruvate + NADH + H(+). The enzyme catalyses (R)-glycerate + NADP(+) = 3-hydroxypyruvate + NADPH + H(+). Its function is as follows. Catalyzes the NADPH-dependent reduction of glyoxylate and hydroxypyruvate into glycolate and glycerate, respectively. Inactive towards 2-oxo-D-gluconate, 2-oxoglutarate, oxaloacetate and pyruvate. Only D- and L-glycerate are involved in the oxidative activity with NADP. Activity with NAD is very low. The sequence is that of Glyoxylate/hydroxypyruvate reductase A (ghrA) from Escherichia coli (strain K12).